The primary structure comprises 300 residues: Ribosomal protein L11 methyltransferase (300 aa).

Residues threonine 152, glycine 173, aspartate 195, and asparagine 234 each contribute to the S-adenosyl-L-methionine site.

The protein belongs to the methyltransferase superfamily. PrmA family.

It is found in the cytoplasm. It carries out the reaction L-lysyl-[protein] + 3 S-adenosyl-L-methionine = N(6),N(6),N(6)-trimethyl-L-lysyl-[protein] + 3 S-adenosyl-L-homocysteine + 3 H(+). In terms of biological role, methylates ribosomal protein L11. The chain is Ribosomal protein L11 methyltransferase from Burkholderia ambifaria (strain ATCC BAA-244 / DSM 16087 / CCUG 44356 / LMG 19182 / AMMD) (Burkholderia cepacia (strain AMMD)).